Reading from the N-terminus, the 431-residue chain is Histidinol dehydrogenase 1 (431 aa).

Positions 127, 188, and 211 each coordinate NAD(+). Substrate is bound by residues Ser234, Gln256, and His259. Zn(2+) contacts are provided by Gln256 and His259. Catalysis depends on proton acceptor residues Glu324 and His325. Substrate contacts are provided by His325, Asp358, Glu412, and His417. Residue Asp358 coordinates Zn(2+). His417 serves as a coordination point for Zn(2+).

The protein belongs to the histidinol dehydrogenase family. The cofactor is Zn(2+).

The enzyme catalyses L-histidinol + 2 NAD(+) + H2O = L-histidine + 2 NADH + 3 H(+). Its pathway is amino-acid biosynthesis; L-histidine biosynthesis; L-histidine from 5-phospho-alpha-D-ribose 1-diphosphate: step 9/9. Functionally, catalyzes the sequential NAD-dependent oxidations of L-histidinol to L-histidinaldehyde and then to L-histidine. The polypeptide is Histidinol dehydrogenase 1 (Trichormus variabilis (strain ATCC 29413 / PCC 7937) (Anabaena variabilis)).